Here is a 555-residue protein sequence, read N- to C-terminus: Protein tyrosine phosphatase-like protein egg-3 (555 aa).

2 short sequence motifs (D-box) span residues Arg-96–Leu-99 and Arg-130–Leu-133. One can recognise a Tyrosine-protein phosphatase domain in the interval Phe-207–Trp-514. Residues Arg-253–Leu-256 carry the RXXL motif; required for cortical localization motif. An RXXL motif motif is present at residues Arg-266 to Leu-269. Short sequence motifs (RXXL motif; required for cortical localization) lie at residues Arg-509–Leu-512 and Arg-525–Leu-528.

The protein belongs to the protein-tyrosine phosphatase family. As to quaternary structure, part of a complex, consisting of pseudophosphatases egg-3, egg-4, egg-5 and kinase mbk-2; this complex is required for the oocyte-to-zygote transition. Interacts (via tyrosine-protein phosphatase domain) with kinase mbk-2 (via N-terminus); the interaction does not affect mbk-2 kinase activity, is enhanced by mbk-2 tyrosine phosphorylation status and requires prior binding of mbk-2 to egg-4 and egg-5. Interacts with egg-4.

Its subcellular location is the cytoplasm. The protein localises to the cell cortex. Functionally, probable pseudophosphatase required for the oocyte-to-zygote transition during which it regulates the polarized dispersal of the cortical actin cytoskeleton, the synthesis of the eggshell chitin layer and the formation of the polar bodies after meiosis I and II. Acts as a scaffold to tether kinase mbk-2 and pseudophosphatases egg-4 and egg-5 to the oocyte cortex and thus restricts mbk-2 activity to the cortex during meiosis I. Regulates mbk-2 localization to cytoplasmic foci during meiosis II. Also required for chitin synthase chs-1 localization to the cell cortex of unfertilized oocytes and to cytoplasmic foci in the fertilized embryo. The polypeptide is Protein tyrosine phosphatase-like protein egg-3 (Caenorhabditis elegans).